An 89-amino-acid polypeptide reads, in one-letter code: UPF0335 protein CCNA_03428 (89 aa).

It belongs to the UPF0335 family.

The protein is UPF0335 protein CCNA_03428 of Caulobacter vibrioides (strain NA1000 / CB15N) (Caulobacter crescentus).